The primary structure comprises 211 residues: Thiamine-phosphate synthase (211 aa).

Residues 40–42 (QLR) and asparagine 72 each bind 4-amino-2-methyl-5-(diphosphooxymethyl)pyrimidine. 2 residues coordinate Mg(2+): aspartate 73 and aspartate 92. Residue serine 111 coordinates 4-amino-2-methyl-5-(diphosphooxymethyl)pyrimidine. 136 to 138 (TST) is a binding site for 2-[(2R,5Z)-2-carboxy-4-methylthiazol-5(2H)-ylidene]ethyl phosphate. Lysine 139 serves as a coordination point for 4-amino-2-methyl-5-(diphosphooxymethyl)pyrimidine. 2-[(2R,5Z)-2-carboxy-4-methylthiazol-5(2H)-ylidene]ethyl phosphate contacts are provided by residues glycine 167 and 187–188 (VS).

The protein belongs to the thiamine-phosphate synthase family. It depends on Mg(2+) as a cofactor.

The catalysed reaction is 2-[(2R,5Z)-2-carboxy-4-methylthiazol-5(2H)-ylidene]ethyl phosphate + 4-amino-2-methyl-5-(diphosphooxymethyl)pyrimidine + 2 H(+) = thiamine phosphate + CO2 + diphosphate. It carries out the reaction 2-(2-carboxy-4-methylthiazol-5-yl)ethyl phosphate + 4-amino-2-methyl-5-(diphosphooxymethyl)pyrimidine + 2 H(+) = thiamine phosphate + CO2 + diphosphate. The enzyme catalyses 4-methyl-5-(2-phosphooxyethyl)-thiazole + 4-amino-2-methyl-5-(diphosphooxymethyl)pyrimidine + H(+) = thiamine phosphate + diphosphate. It functions in the pathway cofactor biosynthesis; thiamine diphosphate biosynthesis; thiamine phosphate from 4-amino-2-methyl-5-diphosphomethylpyrimidine and 4-methyl-5-(2-phosphoethyl)-thiazole: step 1/1. Its function is as follows. Condenses 4-methyl-5-(beta-hydroxyethyl)thiazole monophosphate (THZ-P) and 2-methyl-4-amino-5-hydroxymethyl pyrimidine pyrophosphate (HMP-PP) to form thiamine monophosphate (TMP). The protein is Thiamine-phosphate synthase of Laribacter hongkongensis (strain HLHK9).